Consider the following 276-residue polypeptide: 4-diphosphocytidyl-2-C-methyl-D-erythritol kinase (276 aa).

Residue lysine 13 is part of the active site. 94–104 (PHAGGIGGGSA) provides a ligand contact to ATP. Aspartate 131 is a catalytic residue.

Belongs to the GHMP kinase family. IspE subfamily.

It catalyses the reaction 4-CDP-2-C-methyl-D-erythritol + ATP = 4-CDP-2-C-methyl-D-erythritol 2-phosphate + ADP + H(+). It participates in isoprenoid biosynthesis; isopentenyl diphosphate biosynthesis via DXP pathway; isopentenyl diphosphate from 1-deoxy-D-xylulose 5-phosphate: step 3/6. Functionally, catalyzes the phosphorylation of the position 2 hydroxy group of 4-diphosphocytidyl-2C-methyl-D-erythritol. The protein is 4-diphosphocytidyl-2-C-methyl-D-erythritol kinase of Jannaschia sp. (strain CCS1).